The chain runs to 453 residues: tRNA modification GTPase MnmE (453 aa).

Residues arginine 22, glutamate 79, and lysine 119 each coordinate (6S)-5-formyl-5,6,7,8-tetrahydrofolate. One can recognise a TrmE-type G domain in the interval 215 to 376 (GMKVVIAGRP…LRQHLKECMG (162 aa)). Asparagine 225 lines the K(+) pocket. Residues 225 to 230 (NAGKSS), 244 to 250 (TDIAGTT), 269 to 272 (DTAG), and 334 to 337 (NKAD) contribute to the GTP site. Serine 229 provides a ligand contact to Mg(2+). Residues threonine 244, isoleucine 246, and threonine 249 each contribute to the K(+) site. Threonine 250 is a Mg(2+) binding site. Lysine 453 contacts (6S)-5-formyl-5,6,7,8-tetrahydrofolate.

It belongs to the TRAFAC class TrmE-Era-EngA-EngB-Septin-like GTPase superfamily. TrmE GTPase family. Homodimer. Heterotetramer of two MnmE and two MnmG subunits. K(+) serves as cofactor.

Its subcellular location is the cytoplasm. Exhibits a very high intrinsic GTPase hydrolysis rate. Involved in the addition of a carboxymethylaminomethyl (cmnm) group at the wobble position (U34) of certain tRNAs, forming tRNA-cmnm(5)s(2)U34. This is tRNA modification GTPase MnmE from Vibrio cholerae serotype O1 (strain ATCC 39541 / Classical Ogawa 395 / O395).